The sequence spans 299 residues: Aliphatic sulfonates import ATP-binding protein SsuB (299 aa).

An ABC transporter domain is found at 36 to 257 (LHVQQVIKRY…QHGSAAFAQI (222 aa)). 68-75 (GRSGCGKS) contacts ATP.

The protein belongs to the ABC transporter superfamily. Aliphatic sulfonates importer (TC 3.A.1.17.2) family. In terms of assembly, the complex is composed of two ATP-binding proteins (SsuB), two transmembrane proteins (SsuC) and a solute-binding protein (SsuA).

Its subcellular location is the cell inner membrane. It catalyses the reaction ATP + H2O + aliphatic sulfonate-[sulfonate-binding protein]Side 1 = ADP + phosphate + aliphatic sulfonateSide 2 + [sulfonate-binding protein]Side 1.. Part of the ABC transporter complex SsuABC involved in aliphatic sulfonates import. Responsible for energy coupling to the transport system. This Cupriavidus pinatubonensis (strain JMP 134 / LMG 1197) (Cupriavidus necator (strain JMP 134)) protein is Aliphatic sulfonates import ATP-binding protein SsuB.